A 458-amino-acid polypeptide reads, in one-letter code: ATP synthase subunit beta (458 aa).

Position 147–154 (147–154) interacts with ATP; sequence GGAGVGKT.

Belongs to the ATPase alpha/beta chains family. As to quaternary structure, F-type ATPases have 2 components, CF(1) - the catalytic core - and CF(0) - the membrane proton channel. CF(1) has five subunits: alpha(3), beta(3), gamma(1), delta(1), epsilon(1). CF(0) has three main subunits: a(1), b(2) and c(9-12). The alpha and beta chains form an alternating ring which encloses part of the gamma chain. CF(1) is attached to CF(0) by a central stalk formed by the gamma and epsilon chains, while a peripheral stalk is formed by the delta and b chains.

It localises to the cell inner membrane. It catalyses the reaction ATP + H2O + 4 H(+)(in) = ADP + phosphate + 5 H(+)(out). Its function is as follows. Produces ATP from ADP in the presence of a proton gradient across the membrane. The catalytic sites are hosted primarily by the beta subunits. In Chromohalobacter salexigens (strain ATCC BAA-138 / DSM 3043 / CIP 106854 / NCIMB 13768 / 1H11), this protein is ATP synthase subunit beta.